The primary structure comprises 180 residues: E3 ubiquitin-protein ligase RNF5 (180 aa).

Ala-2 carries the post-translational modification N-acetylalanine. The RING-type zinc-finger motif lies at 27–68 (CNICLETAREAVVSVCGHLYCWPCLHQWLETRPERQECPVCK). The tract at residues 79–110 (LYGRGSQKPQDPRLKTPPRPQGQRPAPESRGG) is disordered. Ser-84 carries the post-translational modification Phosphoserine. Thr-94 bears the Phosphothreonine mark. Ser-107 carries the post-translational modification Phosphoserine. 2 helical membrane-spanning segments follow: residues 118–138 (GGFHFSFGVGAFPFGFFTTVF) and 160–180 (SWQDSLFLFLAIFFFFWLLSI).

This sequence belongs to the RNF5 family. In terms of assembly, interacts with PXN. Interacts with Salmonella typhimurium sopA. Interacts with JKAMP. Interacts with STING1; the interaction of endogenous proteins is dependent on viral infection. As to expression, widely expressed.

It is found in the cell membrane. The protein localises to the mitochondrion membrane. It localises to the endoplasmic reticulum membrane. The catalysed reaction is S-ubiquitinyl-[E2 ubiquitin-conjugating enzyme]-L-cysteine + [acceptor protein]-L-lysine = [E2 ubiquitin-conjugating enzyme]-L-cysteine + N(6)-ubiquitinyl-[acceptor protein]-L-lysine.. It functions in the pathway protein modification; protein ubiquitination. Functionally, membrane-bound E3 ubiquitin-protein ligase that mediates ubiquitination of target proteins. May function together with E2 ubiquitin-conjugating enzymes UBE2D1/UBCH5A and UBE2D2/UBC4. Mediates ubiquitination of PXN/paxillin,thereby regulating cell motility and localization of PXN/paxillin. Catalyzes ubiquitination of Salmonella type III secreted protein sopA. Mediates the 'Lys-63'-linked polyubiquitination of JKAMP thereby regulating JKAMP function by decreasing its association with components of the proteasome and ERAD; the ubiquitination appears to involve E2 ubiquitin-conjugating enzyme UBE2N. Mediates the 'Lys-48'-linked polyubiquitination of STING1 at 'Lys-150' leading to its proteasomal degradation; the ubiquitination occurs in mitochondria after viral transfection and regulates antiviral responses. Catalyzes ubiquitination and subsequent degradation of ATG4B, thereby inhibiting autophagy. This is E3 ubiquitin-protein ligase RNF5 from Homo sapiens (Human).